The sequence spans 296 residues: Large ribosomal subunit protein uL15m (296 aa).

Residues 1-21 (MAGPLQGGGARALDLLRGLPR) constitute a mitochondrion transit peptide. The segment at 22-66 (VSLANLKPNPGSKKPERRPRGRRRGRKCGRGHKGERQRGTRPRLG) is disordered. The segment covering 36 to 52 (PERRPRGRRRGRKCGRG) has biased composition (basic residues).

Belongs to the universal ribosomal protein uL15 family. As to quaternary structure, component of the mitochondrial large ribosomal subunit (mt-LSU). Mature mammalian 55S mitochondrial ribosomes consist of a small (28S) and a large (39S) subunit. The 28S small subunit contains a 12S ribosomal RNA (12S mt-rRNA) and 30 different proteins. The 39S large subunit contains a 16S rRNA (16S mt-rRNA), a copy of mitochondrial valine transfer RNA (mt-tRNA(Val)), which plays an integral structural role, and 52 different proteins.

The protein localises to the mitochondrion. The protein is Large ribosomal subunit protein uL15m (MRPL15) of Homo sapiens (Human).